The following is a 189-amino-acid chain: Crossover junction endodeoxyribonuclease RuvC (189 aa).

Residues Asp11, Glu71, and Asp143 contribute to the active site. Residues Asp11, Glu71, and Asp143 each contribute to the Mg(2+) site.

This sequence belongs to the RuvC family. As to quaternary structure, homodimer which binds Holliday junction (HJ) DNA. The HJ becomes 2-fold symmetrical on binding to RuvC with unstacked arms; it has a different conformation from HJ DNA in complex with RuvA. In the full resolvosome a probable DNA-RuvA(4)-RuvB(12)-RuvC(2) complex forms which resolves the HJ. Requires Mg(2+) as cofactor.

The protein resides in the cytoplasm. It carries out the reaction Endonucleolytic cleavage at a junction such as a reciprocal single-stranded crossover between two homologous DNA duplexes (Holliday junction).. In terms of biological role, the RuvA-RuvB-RuvC complex processes Holliday junction (HJ) DNA during genetic recombination and DNA repair. Endonuclease that resolves HJ intermediates. Cleaves cruciform DNA by making single-stranded nicks across the HJ at symmetrical positions within the homologous arms, yielding a 5'-phosphate and a 3'-hydroxyl group; requires a central core of homology in the junction. The consensus cleavage sequence is 5'-(A/T)TT(C/G)-3'. Cleavage occurs on the 3'-side of the TT dinucleotide at the point of strand exchange. HJ branch migration catalyzed by RuvA-RuvB allows RuvC to scan DNA until it finds its consensus sequence, where it cleaves and resolves the cruciform DNA. The sequence is that of Crossover junction endodeoxyribonuclease RuvC from Methylorubrum populi (strain ATCC BAA-705 / NCIMB 13946 / BJ001) (Methylobacterium populi).